The sequence spans 138 residues: Basic phospholipase A2 homolog Tbo-K49 (138 aa).

Positions 1–16 (MRTLWIMAVLLVGVEG) are cleaved as a signal peptide. Cystine bridges form between Cys42-Cys131, Cys44-Cys60, Cys59-Cys111, Cys65-Cys138, Cys66-Cys104, and Cys91-Cys102. Positions 121 to 133 (KKERINTKIFCKK) are important for membrane-damaging activities in eukaryotes and bacteria; heparin-binding.

Monomer. As to expression, expressed by the venom gland.

The protein resides in the secreted. In terms of biological role, snake venom phospholipase A2 homolog that lacks catalytic activity. It induces local edema. Is myotoxic. A model of myotoxic mechanism has been proposed: an apo Lys49-PLA2 is activated by the entrance of a hydrophobic molecule (e.g. fatty acid) at the hydrophobic channel of the protein leading to a reorientation of a monomer. This reorientation causes a transition between 'inactive' to 'active' states, causing alignment of C-terminal and membrane-docking sites (MDoS) side-by-side and putting the membrane-disruption sites (MDiS) in the same plane, exposed to solvent and in a symmetric position for both monomers. The MDoS region stabilizes the toxin on membrane by the interaction of charged residues with phospholipid head groups. Subsequently, the MDiS region destabilizes the membrane with penetration of hydrophobic residues. This insertion causes a disorganization of the membrane, allowing an uncontrolled influx of ions (i.e. calcium and sodium), and eventually triggering irreversible intracellular alterations and cell death. This is Basic phospholipase A2 homolog Tbo-K49 from Craspedocephalus borneensis (Borneo pit viper).